The sequence spans 608 residues: Probable potassium transport system protein Kup (608 aa).

12 consecutive transmembrane segments (helical) span residues 9–29 (LSGV…TSPL), 46–66 (PAAI…VVSV), 99–119 (TPVL…EVVI), 137–157 (PSLD…LFAI), 165–185 (VGKL…VLGL), 213–233 (TSFF…ALYA), 247–267 (WFVV…ALLL), 285–305 (ALLP…QAVI), 337–357 (IYIP…IMSF), 363–383 (LAAA…ILFC), 396–416 (LVAA…AANL), and 419–439 (IFSG…LMTS).

It belongs to the HAK/KUP transporter (TC 2.A.72) family.

It is found in the cell inner membrane. The catalysed reaction is K(+)(in) + H(+)(in) = K(+)(out) + H(+)(out). In terms of biological role, transport of potassium into the cell. Likely operates as a K(+):H(+) symporter. The polypeptide is Probable potassium transport system protein Kup (Aeromonas salmonicida (strain A449)).